A 70-amino-acid polypeptide reads, in one-letter code: Conotoxin Lt11.6 (70 aa).

The first 26 residues, 1 to 26, serve as a signal peptide directing secretion; sequence MMFRLTSVGSFLLVIVFLNLVVLTNA. 4 cysteine pairs are disulfide-bonded: Cys-27/Cys-41, Cys-34/Cys-46, Cys-40/Cys-50, and Cys-45/Cys-54. Residues 58–70 constitute a propeptide that is removed on maturation; sequence AQRQKLLRSFGQR.

It belongs to the conotoxin I2 superfamily. As to expression, expressed by the venom duct.

The protein resides in the secreted. The protein is Conotoxin Lt11.6 of Conus litteratus (Lettered cone).